The following is a 173-amino-acid chain: Translation initiation factor IF-3 (173 aa).

It belongs to the IF-3 family. In terms of assembly, monomer.

The protein localises to the cytoplasm. In terms of biological role, IF-3 binds to the 30S ribosomal subunit and shifts the equilibrium between 70S ribosomes and their 50S and 30S subunits in favor of the free subunits, thus enhancing the availability of 30S subunits on which protein synthesis initiation begins. This is Translation initiation factor IF-3 from Caulobacter vibrioides (strain ATCC 19089 / CIP 103742 / CB 15) (Caulobacter crescentus).